A 446-amino-acid chain; its full sequence is MLKKIFIKTFGCQMNEYDSNRIFDTVKKIGFEKTEKYEDANCYLLNTCHIRDKAKEKVYHEIGRVKKIFREKKKPIVVVAGCVAQAENQEMLKREPYIDIVIGPQSYHKINEAILNHLKNKKKEEETEFDTISKFNYLSQIKNKDSKVSSFLTIQEGCDKFCHFCVVPYTRGPEYSRPFDQIINEAKELVQSGAKEIILLGQNVNAYSYDEEGKKYRLSDLLIKLDSFDKLERIRYTTSHPKDMTDDLINVYKTSSKLMPLVHLPVQSGSNKILNLMNRKHTIEEYLLVYEKLRKINPKIEFSSDFIIGYPEEDEQDFKMTMELIEKVKFINSYSFIFSPRPGTVAANLTLVDQKKSKQRLEIIQEKLFNNQIKKNKSLENKILNVLVENKMKDGIKLFGRTEYMTSVIFDGNIENIGKLVQVEIISSNQNSLFGKLTESSKKKVA.

One can recognise an MTTase N-terminal domain in the interval Lys-3–Lys-119. Cys-12, Cys-48, Cys-82, Cys-158, Cys-162, and Cys-165 together coordinate [4Fe-4S] cluster. The region spanning Lys-144–Lys-374 is the Radical SAM core domain. One can recognise a TRAM domain in the interval Lys-377 to Glu-439.

Belongs to the methylthiotransferase family. MiaB subfamily. In terms of assembly, monomer. [4Fe-4S] cluster is required as a cofactor.

The protein localises to the cytoplasm. The catalysed reaction is N(6)-dimethylallyladenosine(37) in tRNA + (sulfur carrier)-SH + AH2 + 2 S-adenosyl-L-methionine = 2-methylsulfanyl-N(6)-dimethylallyladenosine(37) in tRNA + (sulfur carrier)-H + 5'-deoxyadenosine + L-methionine + A + S-adenosyl-L-homocysteine + 2 H(+). Functionally, catalyzes the methylthiolation of N6-(dimethylallyl)adenosine (i(6)A), leading to the formation of 2-methylthio-N6-(dimethylallyl)adenosine (ms(2)i(6)A) at position 37 in tRNAs that read codons beginning with uridine. The sequence is that of tRNA-2-methylthio-N(6)-dimethylallyladenosine synthase from Pelagibacter ubique (strain HTCC1062).